The chain runs to 207 residues: Ras-related protein Rab-8A (207 aa).

The GTP site is built by serine 17, glycine 18, valine 19, glycine 20, lysine 21, threonine 22, cysteine 23, serine 39, and threonine 40. Mg(2+) is bound at residue threonine 22. 2 short sequence motifs (switch) span residues 31-45 (DAFN…GIDF) and 63-80 (DTAG…YYRG). The Mg(2+) site is built by threonine 40 and aspartate 63. GTP contacts are provided by glycine 66, asparagine 121, lysine 122, aspartate 124, alanine 152, and lysine 153. Cysteine 204 is subject to Cysteine methyl ester. The S-geranylgeranyl cysteine moiety is linked to residue cysteine 204. A propeptide spans 205-207 (VLL) (removed in mature form).

Belongs to the small GTPase superfamily. Rab family. Requires Mg(2+) as cofactor.

The protein localises to the cell membrane. The protein resides in the golgi apparatus. It is found in the endosome membrane. It localises to the recycling endosome membrane. Its subcellular location is the cell projection. The protein localises to the cilium. The protein resides in the cytoplasmic vesicle. It is found in the phagosome membrane. It localises to the cytoplasm. Its subcellular location is the cytoskeleton. The protein localises to the microtubule organizing center. The protein resides in the centrosome. It is found in the centriole. It localises to the cilium basal body. Its subcellular location is the midbody. It catalyses the reaction GTP + H2O = GDP + phosphate + H(+). Its activity is regulated as follows. Regulated by guanine nucleotide exchange factors (GEFs) which promote the exchange of bound GDP for free GTP, GTPase activating proteins (GAPs) which increase the GTP hydrolysis activity, and GDP dissociation inhibitors (GDIs) which inhibit the dissociation of the nucleotide from the GTPase. Activated in response to insulin. Functionally, the small GTPases Rab are key regulators of intracellular membrane trafficking, from the formation of transport vesicles to their fusion with membranes. Rabs cycle between an inactive GDP-bound form and an active GTP-bound form that is able to recruit to membranes different sets of downstream effectors directly responsible for vesicle formation, movement, tethering and fusion. RAB8A is involved in polarized vesicular trafficking and neurotransmitter release. Together with RAB11A, RAB3IP, the exocyst complex, PARD3, PRKCI, ANXA2, CDC42 and DNMBP promotes transcytosis of PODXL to the apical membrane initiation sites (AMIS), apical surface formation and lumenogenesis. Regulates the compacted morphology of the Golgi. Together with MYO5B and RAB11A participates in epithelial cell polarization. Also involved in membrane trafficking to the cilium and ciliogenesis. Together with MICALL2, may also regulate adherens junction assembly. May play a role in insulin-induced transport to the plasma membrane of the glucose transporter GLUT4 and therefore play a role in glucose homeostasis. Involved in autophagy. Participates in the export of a subset of neosynthesized proteins through a Rab8-Rab10-Rab11-dependent endososomal export route. Targeted to and stabilized on stressed lysosomes through LRRK2 phosphorylation. Suppresses stress-induced lysosomal enlargement through EHBP1 and EHNP1L1 effector proteins. This Gallus gallus (Chicken) protein is Ras-related protein Rab-8A (RAB8A).